The primary structure comprises 499 residues: Maturase K (499 aa).

The protein belongs to the intron maturase 2 family. MatK subfamily.

The protein localises to the plastid. It is found in the chloroplast. Functionally, usually encoded in the trnK tRNA gene intron. Probably assists in splicing its own and other chloroplast group II introns. This chain is Maturase K, found in Ceratonia siliqua (Carob).